The primary structure comprises 339 residues: MKDTADITVLGAGSYGTALAISLASNGHKTLLWGHDPEHIATLSRERCNAAFLPGISFPDCLVMEADLGKALAASRNVLVVVPSHVFGDVLRQAKSLLRADARIVWATKGLEPETGRLLQDVARDALGDAFPLAVLSGPTFAKELAAGLPTAISVAGTDAGFTADLVELLHSPKRLRVYANDDFIGLQLGGAVKNVIAIGAGMSDGIGFGANARTALITRGLVELSRLGEALGAQQATFMGMAGLGDLVLTCTDNQSRNRRFGLALGKGCDVNTAQSEIGQVVEGYRNTKEVFTLAKRLGVEMPITEQIYAVLYQGKSPLDAAKELLAREKKSETAAAD.

NADPH is bound by residues S14, Y15, H35, and K109. K109, G138, and T140 together coordinate sn-glycerol 3-phosphate. A142 contributes to the NADPH binding site. 5 residues coordinate sn-glycerol 3-phosphate: K194, D247, S257, R258, and N259. The Proton acceptor role is filled by K194. R258 is an NADPH binding site. 2 residues coordinate NADPH: V282 and E284.

The protein belongs to the NAD-dependent glycerol-3-phosphate dehydrogenase family.

Its subcellular location is the cytoplasm. The enzyme catalyses sn-glycerol 3-phosphate + NAD(+) = dihydroxyacetone phosphate + NADH + H(+). The catalysed reaction is sn-glycerol 3-phosphate + NADP(+) = dihydroxyacetone phosphate + NADPH + H(+). It functions in the pathway membrane lipid metabolism; glycerophospholipid metabolism. Its function is as follows. Catalyzes the reduction of the glycolytic intermediate dihydroxyacetone phosphate (DHAP) to sn-glycerol 3-phosphate (G3P), the key precursor for phospholipid synthesis. The polypeptide is Glycerol-3-phosphate dehydrogenase [NAD(P)+] (Shewanella amazonensis (strain ATCC BAA-1098 / SB2B)).